A 197-amino-acid chain; its full sequence is uncharacterized protein (197 aa).

This is an uncharacterized protein from Caenorhabditis elegans.